Here is a 155-residue protein sequence, read N- to C-terminus: Ribosome maturation factor RimP (155 aa).

Belongs to the RimP family.

The protein resides in the cytoplasm. In terms of biological role, required for maturation of 30S ribosomal subunits. The sequence is that of Ribosome maturation factor RimP from Deinococcus geothermalis (strain DSM 11300 / CIP 105573 / AG-3a).